Reading from the N-terminus, the 159-residue chain is Aphid transmission protein (159 aa).

The protein belongs to the caulimoviridae ORF II family.

This protein is involved in virus transmission. The sequence is that of Aphid transmission protein from Cauliflower mosaic virus (strain PV147) (CaMV).